Here is a 352-residue protein sequence, read N- to C-terminus: Histidinol-phosphate aminotransferase (352 aa).

K211 carries the post-translational modification N6-(pyridoxal phosphate)lysine.

This sequence belongs to the class-II pyridoxal-phosphate-dependent aminotransferase family. Histidinol-phosphate aminotransferase subfamily. In terms of assembly, homodimer. Requires pyridoxal 5'-phosphate as cofactor.

The enzyme catalyses L-histidinol phosphate + 2-oxoglutarate = 3-(imidazol-4-yl)-2-oxopropyl phosphate + L-glutamate. Its pathway is amino-acid biosynthesis; L-histidine biosynthesis; L-histidine from 5-phospho-alpha-D-ribose 1-diphosphate: step 7/9. The chain is Histidinol-phosphate aminotransferase from Haemophilus influenzae (strain PittEE).